The primary structure comprises 142 residues: 5a,11a-dehydrotetracycline/5a,11a-dehydrooxytetracycline reductase (142 aa).

Belongs to the pyridoxamine 5'-phosphate oxidase family.

The catalysed reaction is tetracycline + oxidized coenzyme F420-(gamma-L-Glu)(n) + H(+) = 5a,11a-dehydrotetracycline + reduced coenzyme F420-(gamma-L-Glu)(n). It carries out the reaction oxytetracycline + oxidized coenzyme F420-(gamma-L-Glu)(n) + H(+) = 5a,11a-dehydrooxytetracycline + reduced coenzyme F420-(gamma-L-Glu)(n). It functions in the pathway antibiotic biosynthesis; oxytetracycline biosynthesis. Functionally, involved in the biosynthesis of the antibiotics tetracycline and oxytetracycline. Catalyzes the C(5) reduction of 5a,11a-dehydrooxytetracycline to yield oxytetracycline as a major product. Also catalyzes the C(12) reduction of 5a,11a-dehydrotetracycline (12-dehydrotetracycline) to produce tetracycline as a minor product. In Streptomyces rimosus subsp. rimosus (strain ATCC 10970 / DSM 40260 / JCM 4667 / NRRL 2234), this protein is 5a,11a-dehydrotetracycline/5a,11a-dehydrooxytetracycline reductase.